The sequence spans 665 residues: Methionine--tRNA ligase (665 aa).

The short motif at 16 to 26 (YYPSGKAHIGH) is the 'HIGH' region element. The 'KMSKS' region motif lies at 311 to 315 (KMSKS). Lysine 314 contributes to the ATP binding site. The tRNA-binding domain occupies 564-665 (DFDKIDLRVA…SALPNGAKVK (102 aa)).

It belongs to the class-I aminoacyl-tRNA synthetase family. MetG type 2B subfamily. Homodimer.

It is found in the cytoplasm. It carries out the reaction tRNA(Met) + L-methionine + ATP = L-methionyl-tRNA(Met) + AMP + diphosphate. In terms of biological role, is required not only for elongation of protein synthesis but also for the initiation of all mRNA translation through initiator tRNA(fMet) aminoacylation. The protein is Methionine--tRNA ligase of Listeria monocytogenes serotype 4b (strain F2365).